Consider the following 194-residue polypeptide: Holliday junction branch migration complex subunit RuvA (194 aa).

The segment at 1-64 is domain I; sequence MISRLTGKLV…EDAHLLFGFA (64 aa). Positions 65–143 are domain II; sequence TAEERKTFRQ…AHTVTDGLFA (79 aa). A flexible linker region spans residues 144–147; the sequence is ASPA. The tract at residues 147 to 194 is domain III; the sequence is AADETEDIVSTLLALGYNEREAKAAVKGVPKGTDVGEGVRLALKNLLK.

This sequence belongs to the RuvA family. Homotetramer. Forms an RuvA(8)-RuvB(12)-Holliday junction (HJ) complex. HJ DNA is sandwiched between 2 RuvA tetramers; dsDNA enters through RuvA and exits via RuvB. An RuvB hexamer assembles on each DNA strand where it exits the tetramer. Each RuvB hexamer is contacted by two RuvA subunits (via domain III) on 2 adjacent RuvB subunits; this complex drives branch migration. In the full resolvosome a probable DNA-RuvA(4)-RuvB(12)-RuvC(2) complex forms which resolves the HJ.

It is found in the cytoplasm. In terms of biological role, the RuvA-RuvB-RuvC complex processes Holliday junction (HJ) DNA during genetic recombination and DNA repair, while the RuvA-RuvB complex plays an important role in the rescue of blocked DNA replication forks via replication fork reversal (RFR). RuvA specifically binds to HJ cruciform DNA, conferring on it an open structure. The RuvB hexamer acts as an ATP-dependent pump, pulling dsDNA into and through the RuvAB complex. HJ branch migration allows RuvC to scan DNA until it finds its consensus sequence, where it cleaves and resolves the cruciform DNA. The sequence is that of Holliday junction branch migration complex subunit RuvA from Neisseria gonorrhoeae (strain ATCC 700825 / FA 1090).